A 134-amino-acid polypeptide reads, in one-letter code: Thionin-2.1 (134 aa).

The first 24 residues, 1-24 (MKGRILILSLLIMSLVMAQVQVEA), serve as a signal peptide directing secretion. 3 cysteine pairs are disulfide-bonded: cysteine 27-cysteine 61, cysteine 28-cysteine 55, and cysteine 40-cysteine 49. A propeptide spans 68-134 (AILENSADAT…VVPPGPPKLL (67 aa)) (acidic domain).

This sequence belongs to the plant thionin (TC 1.C.44) family. Detected in rosette leaves and at a very high level in flowers and in siliques.

It localises to the secreted. Its function is as follows. Seems to function as a defense factor. Thionins are small plant proteins which are toxic to animal cells. They seem to exert their toxic effect at the level of the cell membrane. Their precise function is not known. In Arabidopsis thaliana (Mouse-ear cress), this protein is Thionin-2.1 (THI2.1).